We begin with the raw amino-acid sequence, 70 residues long: Ranatuerin-2SN1 (70 aa).

An N-terminal signal peptide occupies residues 1–22; sequence MFTLKKSLLLIFFLGTISLSLC. A propeptide spans 23-40 (removed in mature form); sequence EKERDADDDEVEVIKQEE. A disulfide bond links Cys-65 and Cys-70.

This sequence belongs to the frog skin active peptide (FSAP) family. Ranatuerin subfamily. In terms of tissue distribution, expressed by the skin glands.

The protein resides in the secreted. Antimicrobial peptide. Weakly active against P.faecalis X29. Not active against fungi. Shows very weak hemolytic activity against human erythrocytes. This is Ranatuerin-2SN1 from Sylvirana spinulosa (Fine-spined frog).